The chain runs to 289 residues: MPKASHQDLRFAFRELLASGSCFHTASVFDPMSARIAADLGFEVGILGGSVASLQVLAAPDFALITLSEFVEQATRIGRVAQLPVLADADHGYGNALNVMRTVIELERAGVAALTIEDTLLPAQFGRKSTDLIPVEEGVGKIRAALEARVDSSLSIIARTNAGVLSTEEIIVRTQSYQKAGADGICMVGVKDFEQLEQIAEHLTVPLMLVTYGNPNLRDDERLARLGVRIVVDGHAAYFAAIKATYDCLRLQRGRQNKSENLSATELSHTYTQPEDYIRWAKEYMSVEE.

Position 50 (S50) interacts with substrate. D88 lines the Mg(2+) pocket. R159 and H235 together coordinate substrate.

Belongs to the isocitrate lyase/PEP mutase superfamily. Oxaloacetate decarboxylase family. Homotetramer; dimer of dimers. The cofactor is Mg(2+).

It carries out the reaction oxaloacetate + H(+) = pyruvate + CO2. In terms of biological role, catalyzes the decarboxylation of oxaloacetate into pyruvate. Seems to play a role in maintaining cellular concentrations of bicarbonate and pyruvate. The chain is Oxaloacetate decarboxylase from Pseudomonas putida (strain ATCC 47054 / DSM 6125 / CFBP 8728 / NCIMB 11950 / KT2440).